A 423-amino-acid polypeptide reads, in one-letter code: Ribosome biogenesis protein WDR12 homolog (423 aa).

Positions 10–93 (VQVHLKTKQE…EDAIEIEYVE (84 aa)) are ubiquitin-like (UBL) domain. 7 WD repeats span residues 105-142 (LHDD…ILTI), 144-186 (GHTA…NAVE), 193-232 (GHER…AGGD), 253-291 (GHRE…IKTE), 293-332 (STNK…GSIV), 338-378 (GHNA…APLY), and 382-420 (GHGE…VETM).

It belongs to the WD repeat WDR12/YTM1 family.

It is found in the nucleus. Its subcellular location is the nucleolus. The protein localises to the nucleoplasm. In terms of biological role, required for maturation of ribosomal RNAs and formation of the large ribosomal subunit. This is Ribosome biogenesis protein WDR12 homolog from Drosophila willistoni (Fruit fly).